A 101-amino-acid polypeptide reads, in one-letter code: NADH-quinone oxidoreductase subunit K (101 aa).

The next 3 helical transmembrane spans lie at 4–24 (LSHY…GIFI), 29–49 (IIVI…NLVA), and 65–85 (FVLT…VVFF).

It belongs to the complex I subunit 4L family. As to quaternary structure, NDH-1 is composed of 14 different subunits. Subunits NuoA, H, J, K, L, M, N constitute the membrane sector of the complex.

The protein localises to the cell inner membrane. The catalysed reaction is a quinone + NADH + 5 H(+)(in) = a quinol + NAD(+) + 4 H(+)(out). In terms of biological role, NDH-1 shuttles electrons from NADH, via FMN and iron-sulfur (Fe-S) centers, to quinones in the respiratory chain. The immediate electron acceptor for the enzyme in this species is believed to be ubiquinone. Couples the redox reaction to proton translocation (for every two electrons transferred, four hydrogen ions are translocated across the cytoplasmic membrane), and thus conserves the redox energy in a proton gradient. The chain is NADH-quinone oxidoreductase subunit K from Methylobacterium nodulans (strain LMG 21967 / CNCM I-2342 / ORS 2060).